The following is a 394-amino-acid chain: Cytochrome b (394 aa).

Transmembrane regions (helical) follow at residues 39–59 (FGSLAGICLVIQIVTGVFLAM), 83–105 (WLLRYMHANGASMFFIVVYLHTF), 120–140 (VWCLGVVIFLLMIVTAFIGYV), and 186–206 (FFSLYHLLPFILVGASLLHLA). Heme b is bound by residues His-89 and His-103. Heme b-binding residues include His-191 and His-204. His-209 lines the a ubiquinone pocket. The next 4 helical transmembrane spans lie at 232-252 (FYVKDLVGWVAFAIFFSIWIF), 296-316 (AGGVAAIALVFICLLALPFFK), 328-348 (IYQGIFWLLLADCLLLGWIGC), and 355-374 (FVTIGQISSIVFFLFFAITP).

The protein belongs to the cytochrome b family. The main subunits of complex b-c1 are: cytochrome b, cytochrome c1 and the Rieske protein. Requires heme b as cofactor.

It is found in the mitochondrion inner membrane. Functionally, component of the ubiquinol-cytochrome c reductase complex (complex III or cytochrome b-c1 complex) that is part of the mitochondrial respiratory chain. The b-c1 complex mediates electron transfer from ubiquinol to cytochrome c. Contributes to the generation of a proton gradient across the mitochondrial membrane that is then used for ATP synthesis. The protein is Cytochrome b (MT-CYB) of Oenothera berteroana (Bertero's evening primrose).